Here is a 464-residue protein sequence, read N- to C-terminus: Trigger factor (464 aa).

One can recognise a PPIase FKBP-type domain in the interval 169–256; it reads GDVAIVDYRG…MKELKAKELP (88 aa).

The protein belongs to the FKBP-type PPIase family. Tig subfamily.

The protein localises to the cytoplasm. The catalysed reaction is [protein]-peptidylproline (omega=180) = [protein]-peptidylproline (omega=0). Functionally, involved in protein export. Acts as a chaperone by maintaining the newly synthesized protein in an open conformation. Functions as a peptidyl-prolyl cis-trans isomerase. The chain is Trigger factor from Microcystis aeruginosa (strain NIES-843 / IAM M-2473).